The primary structure comprises 399 residues: Glycerol-1-phosphate dehydrogenase [NAD(P)+] (399 aa).

Residues D56, 118–122, and 140–143 each bind NAD(+); these read GTIHD and TAPS. D145 lines the substrate pocket. An NAD(+)-binding site is contributed by S149. Residue D192 participates in substrate binding. Ni(2+)-binding residues include D192 and H272. H276 provides a ligand contact to substrate. Residue H292 coordinates Ni(2+).

It belongs to the glycerol-1-phosphate dehydrogenase family. As to quaternary structure, homodimer. The cofactor is Ni(2+).

It localises to the cytoplasm. It catalyses the reaction sn-glycerol 1-phosphate + NAD(+) = dihydroxyacetone phosphate + NADH + H(+). It carries out the reaction sn-glycerol 1-phosphate + NADP(+) = dihydroxyacetone phosphate + NADPH + H(+). In terms of biological role, catalyzes the NAD(P)H-dependent reduction of dihydroxyacetonephosphate (DHAP or glycerone phosphate) to glycerol 1-phosphate (G1P). The G1P thus generated is probably used for the synthesis of phosphoglycerolipids in Gram-positive bacterial species. The chain is Glycerol-1-phosphate dehydrogenase [NAD(P)+] from Halalkalibacterium halodurans (strain ATCC BAA-125 / DSM 18197 / FERM 7344 / JCM 9153 / C-125) (Bacillus halodurans).